Reading from the N-terminus, the 710-residue chain is Pentatricopeptide repeat-containing protein At1g02060, chloroplastic (710 aa).

The N-terminal 21 residues, 1 to 21, are a transit peptide targeting the chloroplast; the sequence is MVSSVPKLHALFVSKSQPVLR. 12 PPR repeats span residues 137-171, 172-202, 208-242, 243-277, 280-314, 315-351, 352-386, 387-421, 429-459, 463-497, 498-532, and 533-567; these read QDRYFNSLIRSYGNAGLFQESVKLFQTMKQMGISP, SVLTFNSLLSILLKRGRTGMAHDLFDEMRRT, DSYTFNTLINGFCKNSMVDEAFRIFKDMELYHCNP, DVVTYNTIIDGLCRAGKVKIAHNVLSGMLKKATDV, NVVSYTTLVRGYCMKQEIDEAVLVFHDMLSRGLKP, NAVTYNTLIKGLSEAHRYDEIKDILIGGNDAFTTFAP, DACTFNILIKAHCDAGHLDAAMKVFQEMLNMKLHP, DSASYSVLIRTLCMRNEFDRAETLFNELFEKEVLL, LAAAYNPMFEYLCANGKTKQAEKVFRQLMKR, DPPSYKTLITGHCREGKFKPAYELLVLMLRREFVP, DLETYELLIDGLLKIGEALLAHDTLQRMLRSSYLP, and VATTFHSVLAELAKRKFANESFCLVTLMLEKRIRQ.

The protein belongs to the PPR family. P subfamily.

The protein localises to the plastid. It is found in the chloroplast. The sequence is that of Pentatricopeptide repeat-containing protein At1g02060, chloroplastic from Arabidopsis thaliana (Mouse-ear cress).